A 486-amino-acid polypeptide reads, in one-letter code: MTSVRGASKTGRTSKTSTATTALVLACTAHFLVVFDTSVITVALPSVRADLGFAPASLQWVVNSYTLAFAGLLLFGGRLADIHGHRRVFLGGLAVFTLTSLIGGLATSPASLIAARAGQGAGAAVLAPLAVTMLTTSFAEGPRRTRALTISTAVALVGGASGNLLGGVFTEFLSWRSVLLVNVPIGIPVLFLAARVLAGPRKRPWGRVRLDLPGAVLATAGLTLLTLGVSQTHEHGWGEAAVAVPLAGGLLALLAFVVVEARFAASPLIPPRLFGLPGVGWGNLAMLLAGASQVPVWFFLTLSMQHVLGYSAAQAGLGFVPHALVMLVVGLRVVPWLMRHVQARVLIAAGAAIGALGFWWQSLLTPDSAYLGGILGPAVLISIGGGLVGTPLARTVTSGVGPLDAGAASGLMNTTRQFGGAFGLAVLLTVTGSGTSGSPAELASHYGDAFVGIAVFMLAIAVLTPVLPALARSTPPGVIHVSPVAR.

Transmembrane regions (helical) follow at residues 24 to 44 (VLACTAHFLVVFDTSVITVAL), 56 to 76 (ASLQWVVNSYTLAFAGLLLFG), 88 to 108 (VFLGGLAVFTLTSLIGGLATS), 121 to 141 (AGAAVLAPLAVTMLTTSFAEG), 153 to 173 (AVALVGGASGNLLGGVFTEFL), 178 to 198 (VLLVNVPIGIPVLFLAARVLA), 210 to 230 (LDLPGAVLATAGLTLLTLGVS), 241 to 261 (AVAVPLAGGLLALLAFVVVEA), 284 to 304 (LAMLLAGASQVPVWFFLTLSM), 317 to 337 (LGFVPHALVMLVVGLRVVPWL), 345 to 365 (VLIAAGAAIGALGFWWQSLLT), 369 to 389 (AYLGGILGPAVLISIGGGLVG), 418 to 438 (FGGAFGLAVLLTVTGSGTSGS), and 450 to 470 (FVGIAVFMLAIAVLTPVLPAL).

Belongs to the major facilitator superfamily.

It is found in the cell membrane. Functionally, involved in cephamycin export. The protein is Cephamycin export protein CmcT (cmcT) of Amycolatopsis lactamdurans (Nocardia lactamdurans).